Here is a 539-residue protein sequence, read N- to C-terminus: uncharacterized protein (539 aa).

Positions 34 to 63 are disordered; sequence AASEVSPIPQERPTTSLRKPTPRVQRPATD. 11 helical membrane passes run 103 to 123, 141 to 161, 184 to 204, 244 to 264, 277 to 299, 325 to 345, 360 to 380, 399 to 419, 434 to 454, 470 to 490, and 496 to 516; these read FATP…TTVF, MTAT…LDTV, ILLL…GILL, GIFH…IFLN, FLGA…IIYI, LAVP…LVTF, VLST…AAAA, THVS…ILFL, VVAL…ADNT, IGGV…AIIL, and WGLY…AGVE.

The protein belongs to the multi antimicrobial extrusion (MATE) (TC 2.A.66.1) family.

Its subcellular location is the vacuole membrane. This is an uncharacterized protein from Schizosaccharomyces pombe (strain 972 / ATCC 24843) (Fission yeast).